A 321-amino-acid polypeptide reads, in one-letter code: Ornithine carbamoyltransferase (321 aa).

Residues 53 to 56 (STRT), Gln80, Arg104, and 131 to 134 (HPCQ) contribute to the carbamoyl phosphate site. Residues Asn166, Asp230, and 234 to 235 (SM) each bind L-ornithine. Residues 270 to 271 (CL) and Arg298 contribute to the carbamoyl phosphate site.

The protein belongs to the aspartate/ornithine carbamoyltransferase superfamily. OTCase family.

The protein resides in the cytoplasm. The catalysed reaction is carbamoyl phosphate + L-ornithine = L-citrulline + phosphate + H(+). It functions in the pathway amino-acid degradation; L-arginine degradation via ADI pathway; carbamoyl phosphate from L-arginine: step 2/2. Reversibly catalyzes the transfer of the carbamoyl group from carbamoyl phosphate (CP) to the N(epsilon) atom of ornithine (ORN) to produce L-citrulline. The protein is Ornithine carbamoyltransferase of Bifidobacterium longum subsp. infantis (strain ATCC 15697 / DSM 20088 / JCM 1222 / NCTC 11817 / S12).